Reading from the N-terminus, the 332-residue chain is Glycerol-3-phosphate dehydrogenase [NAD(P)+] (332 aa).

Ser11, Trp12, Arg32, Arg33, and Lys106 together coordinate NADPH. Residues Lys106 and Gly136 each coordinate sn-glycerol 3-phosphate. Ala140 serves as a coordination point for NADPH. Lys191, Asp244, Ser254, Arg255, and Asn256 together coordinate sn-glycerol 3-phosphate. Lys191 (proton acceptor) is an active-site residue. Arg255 contributes to the NADPH binding site. NADPH-binding residues include Val280 and Glu282.

The protein belongs to the NAD-dependent glycerol-3-phosphate dehydrogenase family.

The protein localises to the cytoplasm. The enzyme catalyses sn-glycerol 3-phosphate + NAD(+) = dihydroxyacetone phosphate + NADH + H(+). The catalysed reaction is sn-glycerol 3-phosphate + NADP(+) = dihydroxyacetone phosphate + NADPH + H(+). It participates in membrane lipid metabolism; glycerophospholipid metabolism. Functionally, catalyzes the reduction of the glycolytic intermediate dihydroxyacetone phosphate (DHAP) to sn-glycerol 3-phosphate (G3P), the key precursor for phospholipid synthesis. In Corynebacterium aurimucosum (strain ATCC 700975 / DSM 44827 / CIP 107346 / CN-1) (Corynebacterium nigricans), this protein is Glycerol-3-phosphate dehydrogenase [NAD(P)+].